A 472-amino-acid chain; its full sequence is ESX-3 secretion system protein EccD3 (472 aa).

11 helical membrane passes run 121-141 (WGIA…ALLA), 155-175 (LAGL…GLLI), 183-203 (GIAL…LAVP), 211-231 (VLLG…IPSA), 236-256 (VVAF…AAGA), 258-278 (LLWQ…ALLV), 327-347 (QSGF…AIAV), 349-369 (PEAL…AATL), 381-401 (AWLL…YTAT), 405-425 (VAAF…VVVA), and 450-470 (GLDV…AWVL).

Belongs to the EccD/Snm4 family. As to quaternary structure, part of the ESX-3 / type VII secretion system (T7SS), which is composed of cytosolic and membrane components. The ESX-3 membrane complex is composed of EccB3, EccC3, EccD3 and EccE3.

It localises to the cell inner membrane. Its function is as follows. Part of the ESX-3 specialized secretion system, which is important for iron and zinc uptake or homeostasis. The polypeptide is ESX-3 secretion system protein EccD3 (Mycobacterium tuberculosis (strain CDC 1551 / Oshkosh)).